The primary structure comprises 190 residues: CASP-like protein 1E2 (190 aa).

A disordered region spans residues 1 to 21 (MEHEGKNNMNGMEMEKGKREL). The Cytoplasmic segment spans residues 1 to 28 (MEHEGKNNMNGMEMEKGKRELGSRKGVE). The helical transmembrane segment at 29–49 (LTMRVLALILTMAAATVLGVA) threads the bilayer. Topologically, residues 50–83 (KQTKVVSIKLIPTLPPLDITTTAKASYLSAFVYN) are extracellular. A helical transmembrane segment spans residues 84-104 (ISVNAIACGYTAISIAILMIS). Residues 105–111 (RGRRSKK) are Cytoplasmic-facing. Residues 112–132 (LLMVVLLGDLVMVALLFSGTG) traverse the membrane as a helical segment. The Extracellular segment spans residues 133-163 (AASAIGLMGLHGNKHVMWKKVCGVFGKFCHR). The chain crosses the membrane as a helical span at residues 164-184 (AAPSLPLTLLAAVVFMFLVVL). At 185 to 190 (DAIKLP) the chain is on the cytoplasmic side.

It belongs to the Casparian strip membrane proteins (CASP) family. Homodimer and heterodimers.

Its subcellular location is the cell membrane. This Arabidopsis thaliana (Mouse-ear cress) protein is CASP-like protein 1E2.